A 557-amino-acid chain; its full sequence is Inositol-3-phosphate synthase 1 (557 aa).

Residues G67, G68, N69, N70, D141, S177, V178, Q188, R191, T228, A229, N230, T231, G278, S279, D303, S306, N337, N338, D339, and K352 each contribute to the NAD(+) site. S279 is subject to Phosphoserine. S357 bears the Phosphoserine mark. NAD(+) contacts are provided by G390, D391, D419, and S420. Residues G512–A557 form a disordered region. S524 is subject to Phosphoserine.

It belongs to the myo-inositol 1-phosphate synthase family. NAD(+) serves as cofactor. In testis, it is expressed in Sertoli cells. Highly expressed in 2 types of germ cells, pachytene spermatocytes and round spermatids.

It localises to the cytoplasm. The enzyme catalyses D-glucose 6-phosphate = 1D-myo-inositol 3-phosphate. The protein operates within polyol metabolism; myo-inositol biosynthesis; myo-inositol from D-glucose 6-phosphate: step 1/2. Key enzyme in myo-inositol biosynthesis pathway that catalyzes the conversion of glucose 6-phosphate to 1-myo-inositol 1-phosphate in a NAD-dependent manner. Rate-limiting enzyme in the synthesis of all inositol-containing compounds. The chain is Inositol-3-phosphate synthase 1 (Isyna1) from Mus musculus (Mouse).